Here is a 442-residue protein sequence, read N- to C-terminus: tRNA-2-methylthio-N(6)-dimethylallyladenosine synthase (442 aa).

In terms of domain architecture, MTTase N-terminal spans 2–120 (KKVFIRTFGC…LPKMIVDKET (119 aa)). The [4Fe-4S] cluster site is built by cysteine 11, cysteine 49, cysteine 83, cysteine 157, cysteine 161, and cysteine 164. A Radical SAM core domain is found at 143 to 375 (RVEGGAAFVS…NEVIEAETAR (233 aa)). In terms of domain architecture, TRAM spans 378-441 (QTMIGTVQRC…TFSLRGKIVE (64 aa)).

The protein belongs to the methylthiotransferase family. MiaB subfamily. As to quaternary structure, monomer. [4Fe-4S] cluster serves as cofactor.

It is found in the cytoplasm. The enzyme catalyses N(6)-dimethylallyladenosine(37) in tRNA + (sulfur carrier)-SH + AH2 + 2 S-adenosyl-L-methionine = 2-methylsulfanyl-N(6)-dimethylallyladenosine(37) in tRNA + (sulfur carrier)-H + 5'-deoxyadenosine + L-methionine + A + S-adenosyl-L-homocysteine + 2 H(+). In terms of biological role, catalyzes the methylthiolation of N6-(dimethylallyl)adenosine (i(6)A), leading to the formation of 2-methylthio-N6-(dimethylallyl)adenosine (ms(2)i(6)A) at position 37 in tRNAs that read codons beginning with uridine. The chain is tRNA-2-methylthio-N(6)-dimethylallyladenosine synthase from Neisseria gonorrhoeae (strain NCCP11945).